Here is a 429-residue protein sequence, read N- to C-terminus: Enolase (429 aa).

A (2R)-2-phosphoglycerate-binding site is contributed by Gln169. Glu211 serves as the catalytic Proton donor. Positions 248, 289, and 316 each coordinate Mg(2+). (2R)-2-phosphoglycerate contacts are provided by Lys341, Arg370, Ser371, and Lys392. Lys341 (proton acceptor) is an active-site residue.

The protein belongs to the enolase family. Mg(2+) is required as a cofactor.

The protein resides in the cytoplasm. Its subcellular location is the secreted. The protein localises to the cell surface. It catalyses the reaction (2R)-2-phosphoglycerate = phosphoenolpyruvate + H2O. Its pathway is carbohydrate degradation; glycolysis; pyruvate from D-glyceraldehyde 3-phosphate: step 4/5. Its function is as follows. Catalyzes the reversible conversion of 2-phosphoglycerate (2-PG) into phosphoenolpyruvate (PEP). It is essential for the degradation of carbohydrates via glycolysis. In Anaplasma phagocytophilum (strain HZ), this protein is Enolase.